The chain runs to 245 residues: AA9 family lytic polysaccharide monooxygenase B (245 aa).

An N-terminal signal peptide occupies residues 1-18; the sequence is MKSAIFAAAVLGAAGVSA. Cu(2+)-binding residues include H19 and H105. C116 and C120 are joined by a disulfide. 2 residues coordinate O2: H179 and Q188. Y190 contacts Cu(2+).

It belongs to the polysaccharide monooxygenase AA9 family. Cu(2+) serves as cofactor.

It is found in the secreted. The enzyme catalyses [(1-&gt;4)-beta-D-glucosyl]n+m + reduced acceptor + O2 = 4-dehydro-beta-D-glucosyl-[(1-&gt;4)-beta-D-glucosyl]n-1 + [(1-&gt;4)-beta-D-glucosyl]m + acceptor + H2O.. Lytic polysaccharide monooxygenase (LPMO) that depolymerizes crystalline and amorphous polysaccharides via the oxidation of scissile alpha- or beta-(1-4)-glycosidic bonds, yielding C1 or C4 oxidation products. Catalysis by LPMOs requires the reduction of the active-site copper from Cu(II) to Cu(I) by a reducing agent and H(2)O(2) or O(2) as a cosubstrate. Active on hemicelluloses, including xylan, glucomannan, and xyloglucan. Has no activity on ivory nut mannan (INM), a linear beta-1,4-linked mannan without substitutions. The chain is AA9 family lytic polysaccharide monooxygenase B from Malbranchea cinnamomea (Thermophilic fungus).